The following is a 460-amino-acid chain: Bifunctional protein GlmU (460 aa).

The tract at residues 1-229 (MTNYAIILAA…FNESLGVNDR (229 aa)) is pyrophosphorylase. UDP-N-acetyl-alpha-D-glucosamine-binding positions include 8 to 11 (LAAG), lysine 22, glutamine 72, and 77 to 78 (GT). Aspartate 102 is a binding site for Mg(2+). UDP-N-acetyl-alpha-D-glucosamine contacts are provided by glycine 139, glutamate 154, asparagine 169, and asparagine 227. Position 227 (asparagine 227) interacts with Mg(2+). The interval 230 to 250 (VALATAETVMRQRITQKHMVN) is linker. An N-acetyltransferase region spans residues 251–460 (GVTFHNPETV…RLAHHPSRSK (210 aa)). Residues arginine 332 and lysine 350 each contribute to the UDP-N-acetyl-alpha-D-glucosamine site. Histidine 362 serves as the catalytic Proton acceptor. 2 residues coordinate UDP-N-acetyl-alpha-D-glucosamine: tyrosine 365 and asparagine 376. Residues alanine 379, 385-386 (NY), serine 404, alanine 422, and arginine 439 each bind acetyl-CoA.

The protein in the N-terminal section; belongs to the N-acetylglucosamine-1-phosphate uridyltransferase family. This sequence in the C-terminal section; belongs to the transferase hexapeptide repeat family. As to quaternary structure, homotrimer. The cofactor is Mg(2+).

It localises to the cytoplasm. The enzyme catalyses alpha-D-glucosamine 1-phosphate + acetyl-CoA = N-acetyl-alpha-D-glucosamine 1-phosphate + CoA + H(+). The catalysed reaction is N-acetyl-alpha-D-glucosamine 1-phosphate + UTP + H(+) = UDP-N-acetyl-alpha-D-glucosamine + diphosphate. The protein operates within nucleotide-sugar biosynthesis; UDP-N-acetyl-alpha-D-glucosamine biosynthesis; N-acetyl-alpha-D-glucosamine 1-phosphate from alpha-D-glucosamine 6-phosphate (route II): step 2/2. It participates in nucleotide-sugar biosynthesis; UDP-N-acetyl-alpha-D-glucosamine biosynthesis; UDP-N-acetyl-alpha-D-glucosamine from N-acetyl-alpha-D-glucosamine 1-phosphate: step 1/1. It functions in the pathway bacterial outer membrane biogenesis; LPS lipid A biosynthesis. In terms of biological role, catalyzes the last two sequential reactions in the de novo biosynthetic pathway for UDP-N-acetylglucosamine (UDP-GlcNAc). The C-terminal domain catalyzes the transfer of acetyl group from acetyl coenzyme A to glucosamine-1-phosphate (GlcN-1-P) to produce N-acetylglucosamine-1-phosphate (GlcNAc-1-P), which is converted into UDP-GlcNAc by the transfer of uridine 5-monophosphate (from uridine 5-triphosphate), a reaction catalyzed by the N-terminal domain. This Streptococcus pyogenes serotype M49 (strain NZ131) protein is Bifunctional protein GlmU.